Here is a 549-residue protein sequence, read N- to C-terminus: Frizzled/smoothened-like sans CRD protein A (549 aa).

Residues 1–22 form the signal peptide; that stretch reads MKFNFKLILIILIINQILIINC. Topologically, residues 23 to 89 are extracellular; the sequence is KENKILEIYK…EVNTLSLMIK (67 aa). A glycan (N-linked (GlcNAc...) asparagine) is linked at Asn-63. Residues 90–110 form a helical membrane-spanning segment; that stretch reads ITGTISFIASLILLLIYSPLI. Residues 111–119 are Cytoplasmic-facing; that stretch reads NRMGYNRHT. The chain crosses the membrane as a helical span at residues 120–140; that stretch reads IGIFFLTFSVFLIMLTDIIYV. Over 141–162 the chain is Extracellular; that stretch reads HHGNDLICPQSHRYSRQNDSGC. An N-linked (GlcNAc...) asparagine glycan is attached at Asn-158. A helical transmembrane segment spans residues 163–183; that stretch reads TITGILFQYGCIAAVLFWATL. At 184-198 the chain is on the cytoplasmic side; that stretch reads SLDLYLTLKKISTKK. A helical transmembrane segment spans residues 199–219; it reads VEKWYLIILTLIALILTFVPL. The Extracellular segment spans residues 220–241; the sequence is VKKSYGYLVTGLACWILDSTDQ. The chain crosses the membrane as a helical span at residues 242–262; it reads IIFFWAPFTAILGIGSILIVL. The Cytoplasmic segment spans residues 263-287; sequence VVYEIYKISKITKQNRGIFQSHIRP. Residues 288 to 308 traverse the membrane as a helical segment; the sequence is LLMVLFIFGQFLFILAFNALI. Residues 309-346 are Extracellular-facing; sequence NNKYDEYSARMDSYIDCLFSSSSYSYLCRLKTFPFEME. The chain crosses the membrane as a helical span at residues 347–367; the sequence is FIVLFFLRLIGIEVLIFYGFT. Over 368–549 the chain is Cytoplasmic; that stretch reads QQTKKILLHS…NNNSNNDENN (182 aa). Composition is skewed to low complexity over residues 417-474 and 536-549; these read NNNN…SQQN and NKNI…DENN. Disordered stretches follow at residues 417–483 and 528–549; these read NNNN…QKLS and QYEE…DENN. A coiled-coil region spans residues 432–475; that stretch reads NNLNNNLNNNNLNNNNNLNNLNNLNINNNLKNSQNNLNNSQQNE.

This sequence belongs to the G-protein coupled receptor Fz/Smo family.

The protein localises to the membrane. This Dictyostelium discoideum (Social amoeba) protein is Frizzled/smoothened-like sans CRD protein A (fscA).